Here is a 271-residue protein sequence, read N- to C-terminus: Tryptophan synthase alpha chain (271 aa).

Residues Glu47 and Asp58 each act as proton acceptor in the active site.

It belongs to the TrpA family. As to quaternary structure, tetramer of two alpha and two beta chains.

It catalyses the reaction (1S,2R)-1-C-(indol-3-yl)glycerol 3-phosphate + L-serine = D-glyceraldehyde 3-phosphate + L-tryptophan + H2O. The protein operates within amino-acid biosynthesis; L-tryptophan biosynthesis; L-tryptophan from chorismate: step 5/5. Its function is as follows. The alpha subunit is responsible for the aldol cleavage of indoleglycerol phosphate to indole and glyceraldehyde 3-phosphate. This chain is Tryptophan synthase alpha chain, found in Thermus thermophilus (strain ATCC BAA-163 / DSM 7039 / HB27).